A 201-amino-acid polypeptide reads, in one-letter code: Recombination protein RecR (201 aa).

A C4-type zinc finger spans residues 60–75; sequence CKTCGNIDTQNPCTVC. The Toprim domain occupies 83-178; it reads AIIVVVADVA…KVTRLAHGVP (96 aa).

This sequence belongs to the RecR family.

In terms of biological role, may play a role in DNA repair. It seems to be involved in an RecBC-independent recombinational process of DNA repair. It may act with RecF and RecO. The sequence is that of Recombination protein RecR from Rhodopseudomonas palustris (strain BisA53).